The primary structure comprises 207 residues: NADH-quinone oxidoreductase subunit A (207 aa).

3 helical membrane passes run 6–26 (WSAIAFILAAIALVVFMLVVP), 62–82 (LVAIFFVIFDLEALYLYAYAV), and 87–107 (AGWLGFAAAAIFITILIIGLV).

This sequence belongs to the complex I subunit 3 family. NDH-1 is composed of 14 different subunits. Subunits NuoA, H, J, K, L, M, N constitute the membrane sector of the complex.

It is found in the cell inner membrane. It catalyses the reaction a quinone + NADH + 5 H(+)(in) = a quinol + NAD(+) + 4 H(+)(out). Functionally, NDH-1 shuttles electrons from NADH, via FMN and iron-sulfur (Fe-S) centers, to quinones in the respiratory chain. The immediate electron acceptor for the enzyme in this species is believed to be ubiquinone. Couples the redox reaction to proton translocation (for every two electrons transferred, four hydrogen ions are translocated across the cytoplasmic membrane), and thus conserves the redox energy in a proton gradient. The sequence is that of NADH-quinone oxidoreductase subunit A from Psychrobacter arcticus (strain DSM 17307 / VKM B-2377 / 273-4).